Here is a 269-residue protein sequence, read N- to C-terminus: MASANTRRVGDGAGGAFQPYLDSLRQELQQRDPTLLSVAVALLAVLLTLVFWKFIWSRKSSQRAVLFVGLCDSGKTLLFVRLLTGQYRDTQTSITDSSAIYKVNNNRGNSLTLIDLPGHESLRFQLLDRFKSSARAVVFVVDSAAFQREVKDVAEFLYQVLIDSMALKNSPSLLIACNKQDIAMAKSAKLIQQQLEKELNTLRVTRSAAPSTLDSSSTAPAQLGKKGKEFEFSQLPLKVEFLECSAKGGRGDTGSADIQDLEKWLAKIA.

The helical transmembrane segment at L35 to I55 threads the bilayer. GTP contacts are provided by residues G69–L77 and T90–S93. The residue at position 110 (S110) is a Phosphoserine. Residues G118 and N178–D181 each bind GTP. T212 bears the Phosphothreonine mark. A246 serves as a coordination point for GTP.

The protein belongs to the SRP receptor beta subunit family. As to quaternary structure, heterodimer with SRPRA.

It localises to the endoplasmic reticulum membrane. Functionally, component of the SRP (signal recognition particle) receptor. Ensures, in conjunction with the signal recognition particle, the correct targeting of the nascent secretory proteins to the endoplasmic reticulum membrane system. May mediate the membrane association of SR. The protein is Signal recognition particle receptor subunit beta (Srprb) of Mus musculus (Mouse).